Consider the following 142-residue polypeptide: ATP synthase epsilon chain (142 aa).

It belongs to the ATPase epsilon chain family. As to quaternary structure, F-type ATPases have 2 components, CF(1) - the catalytic core - and CF(0) - the membrane proton channel. CF(1) has five subunits: alpha(3), beta(3), gamma(1), delta(1), epsilon(1). CF(0) has three main subunits: a, b and c.

The protein localises to the cell inner membrane. Its function is as follows. Produces ATP from ADP in the presence of a proton gradient across the membrane. This chain is ATP synthase epsilon chain, found in Histophilus somni (strain 129Pt) (Haemophilus somnus).